A 293-amino-acid polypeptide reads, in one-letter code: Tumor necrosis factor receptor type 1-associated DEATH domain protein (293 aa).

The Nuclear export signal signature appears at 156 to 171 (LRDDEVTQLEQQLQNS). One can recognise a Death domain in the interval 200–290 (TPADQQRFAA…SMAEIMLGIQ (91 aa)). The Nuclear localization signal signature appears at 216-229 (KRVGRALQKNCRAL).

As to quaternary structure, heterodimer with tnfrsf1a.

The protein localises to the nucleus. The protein resides in the cytoplasm. It is found in the cytoskeleton. Functionally, adapter molecule for tnfrsf1a that specifically associates with the cytoplasmic domain of activated tnfrsf1a mediating its interaction with fadd. The polypeptide is Tumor necrosis factor receptor type 1-associated DEATH domain protein (Danio rerio (Zebrafish)).